Reading from the N-terminus, the 360-residue chain is UDP-N-acetylglucosamine--N-acetylmuramyl-(pentapeptide) pyrophosphoryl-undecaprenol N-acetylglucosamine transferase (360 aa).

UDP-N-acetyl-alpha-D-glucosamine is bound by residues 12–14 (TGG), asparagine 124, arginine 161, serine 189, isoleucine 243, and glutamine 288.

This sequence belongs to the glycosyltransferase 28 family. MurG subfamily.

It is found in the cell inner membrane. The catalysed reaction is di-trans,octa-cis-undecaprenyl diphospho-N-acetyl-alpha-D-muramoyl-L-alanyl-D-glutamyl-meso-2,6-diaminopimeloyl-D-alanyl-D-alanine + UDP-N-acetyl-alpha-D-glucosamine = di-trans,octa-cis-undecaprenyl diphospho-[N-acetyl-alpha-D-glucosaminyl-(1-&gt;4)]-N-acetyl-alpha-D-muramoyl-L-alanyl-D-glutamyl-meso-2,6-diaminopimeloyl-D-alanyl-D-alanine + UDP + H(+). It functions in the pathway cell wall biogenesis; peptidoglycan biosynthesis. Its function is as follows. Cell wall formation. Catalyzes the transfer of a GlcNAc subunit on undecaprenyl-pyrophosphoryl-MurNAc-pentapeptide (lipid intermediate I) to form undecaprenyl-pyrophosphoryl-MurNAc-(pentapeptide)GlcNAc (lipid intermediate II). The protein is UDP-N-acetylglucosamine--N-acetylmuramyl-(pentapeptide) pyrophosphoryl-undecaprenol N-acetylglucosamine transferase of Acidithiobacillus ferrooxidans (strain ATCC 23270 / DSM 14882 / CIP 104768 / NCIMB 8455) (Ferrobacillus ferrooxidans (strain ATCC 23270)).